Consider the following 90-residue polypeptide: U7-theraphotoxin-Hhn1k (90 aa).

An N-terminal signal peptide occupies residues 1 to 19 (MKTAIFTVVLALAVFAVLS). A propeptide spanning residues 20–50 (FGWEANEKALSEEFTELIHEKEAASETEARE) is cleaved from the precursor. Intrachain disulfides connect cysteine 51–cysteine 65 and cysteine 58–cysteine 70.

It belongs to the neurotoxin 10 (Hwtx-1) family. 13 (Hntx-13) subfamily. In terms of tissue distribution, expressed by the venom gland.

It is found in the secreted. Ion channel inhibitor. The sequence is that of U7-theraphotoxin-Hhn1k from Cyriopagopus hainanus (Chinese bird spider).